The chain runs to 486 residues: Glutamyl-tRNA(Gln) amidotransferase subunit A (486 aa).

Catalysis depends on charge relay system residues K79 and S154. S178 serves as the catalytic Acyl-ester intermediate.

The protein belongs to the amidase family. GatA subfamily. In terms of assembly, heterotrimer of A, B and C subunits.

It carries out the reaction L-glutamyl-tRNA(Gln) + L-glutamine + ATP + H2O = L-glutaminyl-tRNA(Gln) + L-glutamate + ADP + phosphate + H(+). Its function is as follows. Allows the formation of correctly charged Gln-tRNA(Gln) through the transamidation of misacylated Glu-tRNA(Gln) in organisms which lack glutaminyl-tRNA synthetase. The reaction takes place in the presence of glutamine and ATP through an activated gamma-phospho-Glu-tRNA(Gln). This Dehalococcoides mccartyi (strain CBDB1) protein is Glutamyl-tRNA(Gln) amidotransferase subunit A.